A 265-amino-acid chain; its full sequence is Thymidine kinase 2, mitochondrial (265 aa).

The N-terminal 33 residues, 1–33 (MLLWPLRGWAARALRCFGPGSRGSPASGPGPRR), are a transit peptide targeting the mitochondrion. Positions 20–32 (GSRGSPASGPGPR) are enriched in low complexity. The interval 20 to 47 (GSRGSPASGPGPRRVQRRAWPPDKEQEK) is disordered. 57 to 65 (GNIASGKTT) contacts ATP. The active-site Proton acceptor is the Glu133.

This sequence belongs to the DCK/DGK family. As to quaternary structure, monomer. Predominantly expressed in liver, pancreas, muscle, and brain.

It is found in the mitochondrion. It carries out the reaction thymidine + ATP = dTMP + ADP + H(+). The enzyme catalyses 2'-deoxycytidine + ATP = dCMP + ADP + H(+). The catalysed reaction is 2'-deoxyuridine + ATP = dUMP + ADP + H(+). In terms of biological role, phosphorylates thymidine, deoxycytidine, and deoxyuridine in the mitochondrial matrix. In non-replicating cells, where cytosolic dNTP synthesis is down-regulated, mtDNA synthesis depends solely on TK2 and DGUOK. Widely used as target of antiviral and chemotherapeutic agents. In Homo sapiens (Human), this protein is Thymidine kinase 2, mitochondrial.